A 391-amino-acid chain; its full sequence is Phosphoglycerate kinase (391 aa).

Substrate-binding positions include 21-23 (DLN), R36, 59-62 (HRGR), R113, and R146. Residues K197, E314, and 340 to 343 (GGDT) each bind ATP.

Belongs to the phosphoglycerate kinase family. As to quaternary structure, monomer.

It is found in the cytoplasm. The enzyme catalyses (2R)-3-phosphoglycerate + ATP = (2R)-3-phospho-glyceroyl phosphate + ADP. The protein operates within carbohydrate degradation; glycolysis; pyruvate from D-glyceraldehyde 3-phosphate: step 2/5. The protein is Phosphoglycerate kinase of Ruthia magnifica subsp. Calyptogena magnifica.